Here is a 539-residue protein sequence, read N- to C-terminus: Chaperonin GroEL 2 (539 aa).

ATP contacts are provided by residues 30-33 (TLGP), Lys-51, 87-91 (DGTTT), Gly-415, 480-482 (NAA), and Asp-496.

The protein belongs to the chaperonin (HSP60) family. Forms a cylinder of 14 subunits composed of two heptameric rings stacked back-to-back. Interacts with the co-chaperonin GroES.

It is found in the cytoplasm. The enzyme catalyses ATP + H2O + a folded polypeptide = ADP + phosphate + an unfolded polypeptide.. In terms of biological role, together with its co-chaperonin GroES, plays an essential role in assisting protein folding. The GroEL-GroES system forms a nano-cage that allows encapsulation of the non-native substrate proteins and provides a physical environment optimized to promote and accelerate protein folding. The chain is Chaperonin GroEL 2 from Sphingopyxis alaskensis (strain DSM 13593 / LMG 18877 / RB2256) (Sphingomonas alaskensis).